The sequence spans 216 residues: Transmembrane emp24 domain-containing protein eca (216 aa).

The first 20 residues, 1-20, serve as a signal peptide directing secretion; the sequence is MRDQFISLALILCVLHSACG. Over 21–182 the chain is Lumenal; that stretch reads LYFHISETER…FRHTSESTNS (162 aa). The GOLD domain occupies 30 to 126; sequence RKCFIEEVPD…QLRVHLDIQV (97 aa). The stretch at 134-164 forms a coiled coil; sequence ANVAQKEKLTELQLRIRQLLDQVEQITKEQN. The helical transmembrane segment at 183-203 threads the bilayer; it reads RVLWWSLAQTIVLVCMGFWQM. Residues 204-216 are Cytoplasmic-facing; sequence RHLKSFFEAKKLV. Residues 213–216 carry the Prevents secretion from ER motif; sequence KKLV.

The protein belongs to the EMP24/GP25L family.

It localises to the endoplasmic reticulum membrane. Eca and bai are essential, though not redundant, for dorsoventral patterning of the embryo. Specifically required during early embryogenesis for the activity of maternal tkv, while the zygotic tkv is not affected. Involved in Golgi organization. This Drosophila sechellia (Fruit fly) protein is Transmembrane emp24 domain-containing protein eca.